A 308-amino-acid chain; its full sequence is Acetaldehyde dehydrogenase (308 aa).

25–28 (TGAI) contributes to the NAD(+) binding site. The active-site Acyl-thioester intermediate is C139. N279 is a binding site for NAD(+).

Belongs to the acetaldehyde dehydrogenase family.

It carries out the reaction acetaldehyde + NAD(+) + CoA = acetyl-CoA + NADH + H(+). This Streptomyces griseus subsp. griseus (strain JCM 4626 / CBS 651.72 / NBRC 13350 / KCC S-0626 / ISP 5235) protein is Acetaldehyde dehydrogenase.